A 170-amino-acid chain; its full sequence is ATP synthase subunit b (170 aa).

The helical transmembrane segment at 22–41 (ILNWAVVVFGLYKFLPGFLG) threads the bilayer. The segment at 76-98 (LSSAAEKASQIKADSLKRSESIR) is disordered. The span at 89–98 (DSLKRSESIR) shows a compositional bias: basic and acidic residues.

The protein belongs to the ATPase B chain family. In terms of assembly, F-type ATPases have 2 components, F(1) - the catalytic core - and F(0) - the membrane proton channel. F(1) has five subunits: alpha(3), beta(3), gamma(1), delta(1), epsilon(1). F(0) has four main subunits: a(1), b(1), b'(1) and c(10-14). The alpha and beta chains form an alternating ring which encloses part of the gamma chain. F(1) is attached to F(0) by a central stalk formed by the gamma and epsilon chains, while a peripheral stalk is formed by the delta, b and b' chains.

It localises to the cellular thylakoid membrane. In terms of biological role, f(1)F(0) ATP synthase produces ATP from ADP in the presence of a proton or sodium gradient. F-type ATPases consist of two structural domains, F(1) containing the extramembraneous catalytic core and F(0) containing the membrane proton channel, linked together by a central stalk and a peripheral stalk. During catalysis, ATP synthesis in the catalytic domain of F(1) is coupled via a rotary mechanism of the central stalk subunits to proton translocation. Component of the F(0) channel, it forms part of the peripheral stalk, linking F(1) to F(0). The sequence is that of ATP synthase subunit b from Prochlorococcus marinus (strain AS9601).